The sequence spans 361 residues: Prostaglandin E2 receptor EP2 subtype (361 aa).

Residues 1–10 (MGSISNNSGS) show a composition bias toward polar residues. Residues 1-21 (MGSISNNSGSEDCESREWLPS) form a disordered region. The Extracellular portion of the chain corresponds to 1-23 (MGSISNNSGSEDCESREWLPSGE). N-linked (GlcNAc...) asparagine glycosylation is present at N6. Residues 24–47 (SPAISSAMFSAGVLGNLIALALLA) form a helical membrane-spanning segment. The Cytoplasmic segment spans residues 48–65 (RRWRGDAGRRAGRGNSIS). The helical transmembrane segment at 66–91 (LFHVLVTELVFTDLLGTCLISPVVLA) threads the bilayer. The Extracellular segment spans residues 92 to 111 (SYARNQTLMALEPERRACTY). An N-linked (GlcNAc...) asparagine glycan is attached at N96. A disulfide bridge connects residues C109 and C187. Residues 112–132 (FAFAMTFFSLATMLMLFAMAL) traverse the membrane as a helical segment. At 133–151 (ERYLSIGRPYFYQRHVTRR) the chain is on the cytoplasmic side. The chain crosses the membrane as a helical span at residues 152–176 (GGLAVLPTIYTVSLLFCSLPLLGYG). The Extracellular segment spans residues 177 to 198 (QYVQYCPGTWCFIRHGRTAYLQ). A helical membrane pass occupies residues 199–223 (LYATLLLLLIVAVLACNFSVILNLI). The Cytoplasmic segment spans residues 224-262 (RMHRRSGRSRCGPSLGSCRDGSGTRRRGERVSVAEETDH). The segment at 230–253 (GRSRCGPSLGSCRDGSGTRRRGER) is disordered. Residues 263 to 286 (LILLAIMTITFAICSLPFTIFAYM) form a helical membrane-spanning segment. N-linked (GlcNAc...) asparagine glycosylation occurs at N287. Residues 287 to 299 (NETSSRREKWDLQ) lie on the Extracellular side of the membrane. The chain crosses the membrane as a helical span at residues 300 to 323 (ALRFLSINSIIDPWVFAIFRPPVL). At 324 to 361 (RLMRSVLCCRVSLRAQDATQTSCSIQSNASRLTFVDTS) the chain is on the cytoplasmic side.

This sequence belongs to the G-protein coupled receptor 1 family.

The protein localises to the cell membrane. Functionally, receptor for prostaglandin E2 (PGE2). The activity of this receptor is mediated by G(s) proteins that stimulate adenylate cyclase. The subsequent raise in intracellular cAMP is responsible for the relaxing effect of this receptor on smooth muscle. This Canis lupus familiaris (Dog) protein is Prostaglandin E2 receptor EP2 subtype (PTGER2).